A 181-amino-acid polypeptide reads, in one-letter code: MSSVIASRRYAYAFLSAAEAGGFLETVTGEMQMVGETLAASRDLQRALASPLINADRKTHLLEEIFAEAVGDKMMLFLRLIAHKKRAGILGGITQEFAALLDEKNGIVNAAVTSATELSDSQQKALSRSLEGYTGKKVRSAMKIDESLIGGLSVKIGDTIFDGSVRHQLQLLREKLVAVEA.

It belongs to the ATPase delta chain family. In terms of assembly, F-type ATPases have 2 components, F(1) - the catalytic core - and F(0) - the membrane proton channel. F(1) has five subunits: alpha(3), beta(3), gamma(1), delta(1), epsilon(1). F(0) has three main subunits: a(1), b(2) and c(10-14). The alpha and beta chains form an alternating ring which encloses part of the gamma chain. F(1) is attached to F(0) by a central stalk formed by the gamma and epsilon chains, while a peripheral stalk is formed by the delta and b chains.

Its subcellular location is the cell inner membrane. In terms of biological role, f(1)F(0) ATP synthase produces ATP from ADP in the presence of a proton or sodium gradient. F-type ATPases consist of two structural domains, F(1) containing the extramembraneous catalytic core and F(0) containing the membrane proton channel, linked together by a central stalk and a peripheral stalk. During catalysis, ATP synthesis in the catalytic domain of F(1) is coupled via a rotary mechanism of the central stalk subunits to proton translocation. Its function is as follows. This protein is part of the stalk that links CF(0) to CF(1). It either transmits conformational changes from CF(0) to CF(1) or is implicated in proton conduction. The sequence is that of ATP synthase subunit delta from Chlorobium phaeovibrioides (strain DSM 265 / 1930) (Prosthecochloris vibrioformis (strain DSM 265)).